We begin with the raw amino-acid sequence, 196 residues long: Chromophore lyase CpcT/CpeT (196 aa).

It belongs to the CpcT/CpeT biliprotein lyase family.

Covalently attaches a chromophore to Cys residue(s) of phycobiliproteins. This chain is Chromophore lyase CpcT/CpeT, found in Synechococcus sp. (strain WH8020).